The following is a 793-amino-acid chain: Serine/threonine-protein kinase CLA4 (793 aa).

The tract at residues 8-27 is disordered; sequence RELSESDFQDIGPAPKPPPV. A PH domain is found at 56-168; the sequence is QRKKSGWVSY…WLDSIFSKCP (113 aa). The 14-residue stretch at 173 to 186 folds into the CRIB domain; sequence VSSPTNFTHKVHVG. Disordered regions lie at residues 243-369 and 383-476; these read AAAQ…ESPT and QKQL…RPTM. 3 stretches are compositionally biased toward polar residues: residues 258 to 276, 312 to 337, and 355 to 369; these read TLSS…STPP, GVTT…QSGP, and LGNS…ESPT. Residues 498–776 enclose the Protein kinase domain; the sequence is FQMIEKAGQG…TEELLHHSFF (279 aa). ATP-binding positions include 504-512 and Lys545; that span reads AGQGASGSV. The active-site Proton acceptor is the Asp644.

It belongs to the protein kinase superfamily. STE Ser/Thr protein kinase family. STE20 subfamily.

The catalysed reaction is L-seryl-[protein] + ATP = O-phospho-L-seryl-[protein] + ADP + H(+). It catalyses the reaction L-threonyl-[protein] + ATP = O-phospho-L-threonyl-[protein] + ADP + H(+). Functionally, required for hyphal maturation and for septation. This chain is Serine/threonine-protein kinase CLA4 (CLA4), found in Eremothecium gossypii (strain ATCC 10895 / CBS 109.51 / FGSC 9923 / NRRL Y-1056) (Yeast).